The chain runs to 728 residues: Ribosome biogenesis protein bop1-B (728 aa).

Positions 1-114 (MKRGSKRESG…ENDSSDEEDI (114 aa)) are disordered. Residues 50–67 (SGTDSSDDEEDHSSEEVQ) are compositionally biased toward acidic residues. WD repeat units follow at residues 393–432 (GHKD…CMKS), 434–474 (VLEG…RLLC), 514–556 (KHQK…SQNP), 559–597 (KNKG…LTKK), 600–639 (TNCK…KPYK), 643–682 (HHKK…DLLQ), and 698–728 (HRDL…RLFT).

The protein belongs to the WD repeat BOP1/ERB1 family. In terms of assembly, component of the PeBoW complex, composed of bop1, pes1 and wdr12. The complex is held together by bop1, which interacts with pes1 via its N-terminal domain and with wdr12 via a high-affinity interaction between the seven-bladed beta-propeller domains of the 2 proteins. The PeBoW complex associates with the 66S pre-ribosome.

It localises to the nucleus. Its subcellular location is the nucleolus. The protein localises to the nucleoplasm. In terms of biological role, component of the PeBoW complex, which is required for maturation of 28S and 5.8S ribosomal RNAs and formation of the 60S ribosome. This is Ribosome biogenesis protein bop1-B (bop1-b) from Xenopus laevis (African clawed frog).